The sequence spans 152 residues: Siroheme decarboxylase NirD subunit (152 aa).

This sequence belongs to the Ahb/Nir family. In terms of assembly, probably forms a complex composed of NirD, NirL, NirG and NirH. All proteins are required for the total conversion of siroheme to didecarboxysiroheme.

It catalyses the reaction siroheme + 2 H(+) = 12,18-didecarboxysiroheme + 2 CO2. It participates in porphyrin-containing compound metabolism. Functionally, involved in heme d1 biosynthesis. Catalyzes the decarboxylation of siroheme into didecarboxysiroheme. In Stutzerimonas stutzeri (Pseudomonas stutzeri), this protein is Siroheme decarboxylase NirD subunit.